The chain runs to 167 residues: uncharacterized protein (167 aa).

Residues 1–21 (MFDFSFPTPASAGTRMGPASC) are disordered.

This is an uncharacterized protein from Homo sapiens (Human).